The following is a 1031-amino-acid chain: uncharacterized protein (1031 aa).

The segment at phenylalanine 50–asparagine 85 adopts an SWIM-type zinc-finger fold. In terms of domain architecture, Helicase ATP-binding spans arginine 590–asparagine 751. Aspartate 603 to threonine 610 is an ATP binding site. A DEAQ box motif is present at residues aspartate 702–glutamine 705. In terms of domain architecture, Helicase C-terminal spans alanine 868–serine 1022.

This sequence belongs to the SNF2/RAD54 helicase family.

This is an uncharacterized protein from Mycoplasma genitalium (strain ATCC 33530 / DSM 19775 / NCTC 10195 / G37) (Mycoplasmoides genitalium).